The following is a 411-amino-acid chain: Arginase (411 aa).

The disordered stretch occupies residues 83–106; the sequence is NNYINNNDNNNDNNNDNNNDNNNN. Residues H193, D216, H218, and D220 each contribute to the Mn(2+) site. L-arginine contacts are provided by N222, S229, and D274. Residues D323 and D325 each contribute to the Mn(2+) site.

It belongs to the arginase family. Homotrimer; oligomerization is dependent on Mn(2+) binding. Mn(2+) serves as cofactor.

It carries out the reaction L-arginine + H2O = urea + L-ornithine. It participates in nitrogen metabolism; urea cycle; L-ornithine and urea from L-arginine: step 1/1. Its activity is regulated as follows. Feedback inhibition by product L-ornithine,. Inhibited by 2(S)-amino-6-boronohexanoic acid (ABH); however, with less efficiency than human ARG1. In terms of biological role, catalyzes the hydrolysis of L-arginine into urea and L-ornithine, which is a precursor for polyamine biosynthesis. May play a role in parasite intra-hepatic development during the host liver stage. This Plasmodium falciparum (isolate 3D7) protein is Arginase.